The sequence spans 896 residues: Valine--tRNA ligase (896 aa).

The 'HIGH' region signature appears at 43-53 (PNVTGSLHIGH). The 'KMSKS' region motif lies at 545–549 (KMSKS). ATP is bound at residue Lys-548. A coiled-coil region spans residues 831–857 (DLDAERARLAKGIAAAEKERDGLAARL).

Belongs to the class-I aminoacyl-tRNA synthetase family. ValS type 1 subfamily. Monomer.

The protein localises to the cytoplasm. It catalyses the reaction tRNA(Val) + L-valine + ATP = L-valyl-tRNA(Val) + AMP + diphosphate. Catalyzes the attachment of valine to tRNA(Val). As ValRS can inadvertently accommodate and process structurally similar amino acids such as threonine, to avoid such errors, it has a 'posttransfer' editing activity that hydrolyzes mischarged Thr-tRNA(Val) in a tRNA-dependent manner. In Rhizorhabdus wittichii (strain DSM 6014 / CCUG 31198 / JCM 15750 / NBRC 105917 / EY 4224 / RW1) (Sphingomonas wittichii), this protein is Valine--tRNA ligase.